Reading from the N-terminus, the 356-residue chain is UDP-3-O-acylglucosamine N-acyltransferase (356 aa).

Histidine 242 functions as the Proton acceptor in the catalytic mechanism.

It belongs to the transferase hexapeptide repeat family. LpxD subfamily. In terms of assembly, homotrimer.

It carries out the reaction a UDP-3-O-[(3R)-3-hydroxyacyl]-alpha-D-glucosamine + a (3R)-hydroxyacyl-[ACP] = a UDP-2-N,3-O-bis[(3R)-3-hydroxyacyl]-alpha-D-glucosamine + holo-[ACP] + H(+). It functions in the pathway bacterial outer membrane biogenesis; LPS lipid A biosynthesis. Its function is as follows. Catalyzes the N-acylation of UDP-3-O-acylglucosamine using 3-hydroxyacyl-ACP as the acyl donor. Is involved in the biosynthesis of lipid A, a phosphorylated glycolipid that anchors the lipopolysaccharide to the outer membrane of the cell. This Acinetobacter baumannii (strain AB0057) protein is UDP-3-O-acylglucosamine N-acyltransferase.